Consider the following 100-residue polypeptide: Aspartyl/glutamyl-tRNA(Asn/Gln) amidotransferase subunit C (100 aa).

Belongs to the GatC family. Heterotrimer of A, B and C subunits.

The enzyme catalyses L-glutamyl-tRNA(Gln) + L-glutamine + ATP + H2O = L-glutaminyl-tRNA(Gln) + L-glutamate + ADP + phosphate + H(+). It carries out the reaction L-aspartyl-tRNA(Asn) + L-glutamine + ATP + H2O = L-asparaginyl-tRNA(Asn) + L-glutamate + ADP + phosphate + 2 H(+). Allows the formation of correctly charged Asn-tRNA(Asn) or Gln-tRNA(Gln) through the transamidation of misacylated Asp-tRNA(Asn) or Glu-tRNA(Gln) in organisms which lack either or both of asparaginyl-tRNA or glutaminyl-tRNA synthetases. The reaction takes place in the presence of glutamine and ATP through an activated phospho-Asp-tRNA(Asn) or phospho-Glu-tRNA(Gln). The protein is Aspartyl/glutamyl-tRNA(Asn/Gln) amidotransferase subunit C of Staphylococcus carnosus (strain TM300).